The chain runs to 242 residues: 4-hydroxy-tetrahydrodipicolinate reductase (242 aa).

NAD(+) contacts are provided by residues 8–13 (GAKGRM), 75–77 (GTT), and 99–102 (ATNM). The Proton donor/acceptor role is filled by His-131. His-132 serves as a coordination point for (S)-2,3,4,5-tetrahydrodipicolinate. Lys-135 functions as the Proton donor in the catalytic mechanism. 141–142 (GT) serves as a coordination point for (S)-2,3,4,5-tetrahydrodipicolinate.

Belongs to the DapB family.

The protein resides in the cytoplasm. The enzyme catalyses (S)-2,3,4,5-tetrahydrodipicolinate + NAD(+) + H2O = (2S,4S)-4-hydroxy-2,3,4,5-tetrahydrodipicolinate + NADH + H(+). It carries out the reaction (S)-2,3,4,5-tetrahydrodipicolinate + NADP(+) + H2O = (2S,4S)-4-hydroxy-2,3,4,5-tetrahydrodipicolinate + NADPH + H(+). Its pathway is amino-acid biosynthesis; L-lysine biosynthesis via DAP pathway; (S)-tetrahydrodipicolinate from L-aspartate: step 4/4. In terms of biological role, catalyzes the conversion of 4-hydroxy-tetrahydrodipicolinate (HTPA) to tetrahydrodipicolinate. In Campylobacter jejuni subsp. jejuni serotype O:2 (strain ATCC 700819 / NCTC 11168), this protein is 4-hydroxy-tetrahydrodipicolinate reductase.